A 213-amino-acid polypeptide reads, in one-letter code: Protein FAM156A/FAM156B (213 aa).

Methionine 1 carries the N-acetylmethionine modification. A disordered region spans residues 1-62 (MDPLQKRNPA…SQAVPLPEGL (62 aa)). A compositionally biased stretch (polar residues) spans 8–37 (NPASPSKSSPMTAAETSQEGPAPSQPSYSE). Serine 114 is subject to Phosphoserine. A helical transmembrane segment spans residues 154–170 (WETLVQGLSGLTLSLGT). Positions 165-198 (TLSLGTNQPGPLPEAALQPQETEEKRQRERQQES) are disordered. The span at 186–197 (TEEKRQRERQQE) shows a compositional bias: basic and acidic residues.

It is found in the membrane. This is Protein FAM156A/FAM156B (FAM156A) from Homo sapiens (Human).